A 224-amino-acid chain; its full sequence is Leucyl/phenylalanyl-tRNA--protein transferase (224 aa).

The protein belongs to the L/F-transferase family.

The protein resides in the cytoplasm. It catalyses the reaction N-terminal L-lysyl-[protein] + L-leucyl-tRNA(Leu) = N-terminal L-leucyl-L-lysyl-[protein] + tRNA(Leu) + H(+). The catalysed reaction is N-terminal L-arginyl-[protein] + L-leucyl-tRNA(Leu) = N-terminal L-leucyl-L-arginyl-[protein] + tRNA(Leu) + H(+). The enzyme catalyses L-phenylalanyl-tRNA(Phe) + an N-terminal L-alpha-aminoacyl-[protein] = an N-terminal L-phenylalanyl-L-alpha-aminoacyl-[protein] + tRNA(Phe). Functionally, functions in the N-end rule pathway of protein degradation where it conjugates Leu, Phe and, less efficiently, Met from aminoacyl-tRNAs to the N-termini of proteins containing an N-terminal arginine or lysine. This chain is Leucyl/phenylalanyl-tRNA--protein transferase, found in Rhodopseudomonas palustris (strain HaA2).